Consider the following 117-residue polypeptide: Large ribosomal subunit protein eL8 (117 aa).

It belongs to the eukaryotic ribosomal protein eL8 family. Part of the 50S ribosomal subunit. Probably part of the RNase P complex.

It localises to the cytoplasm. In terms of biological role, multifunctional RNA-binding protein that recognizes the K-turn motif in ribosomal RNA, the RNA component of RNase P, box H/ACA, box C/D and box C'/D' sRNAs. The protein is Large ribosomal subunit protein eL8 of Methanocaldococcus jannaschii (strain ATCC 43067 / DSM 2661 / JAL-1 / JCM 10045 / NBRC 100440) (Methanococcus jannaschii).